The following is a 292-amino-acid chain: Inositol monophosphatase 2 (292 aa).

Mg(2+)-binding residues include Glu-75, Asp-94, Ile-96, Asp-97, and Asp-231. Glu-75 provides a ligand contact to substrate. Residues 96–99 (IDGT) and Asp-231 each bind substrate.

This sequence belongs to the inositol monophosphatase superfamily. Mg(2+) serves as cofactor.

It carries out the reaction a myo-inositol phosphate + H2O = myo-inositol + phosphate. Its pathway is polyol metabolism; myo-inositol biosynthesis; myo-inositol from D-glucose 6-phosphate: step 2/2. With respect to regulation, inhibited by Li(+) and Na(+). Responsible for the provision of inositol required for synthesis of phosphatidylinositol and polyphosphoinositides and involved in the inositol cycle of calcium signaling. The protein is Inositol monophosphatase 2 (INM2) of Saccharomyces cerevisiae (strain ATCC 204508 / S288c) (Baker's yeast).